The sequence spans 11197 residues: MLAGRPPPPVSSLVHDMIAQRARKQPDAEASISWDTTMTYADLDELSDTVASHLVSIGLQVGSTVVTCLDKSGWVPAIYLSILKAGGAFAPVSPGLSADQLTSAMRRLSPSIVISSTPNLSKFVGLAEHVLDISEILKTPKNTNTQLLSSLTVAVQDPACVLFTSKGEGEETLLVLDHVAVCTSIVTNSNVHDFSPATRTLQFAPYDSRASISDVLFTLAAGGCVCTVSEEEQTGRIADACTRMNPSLVCLTPSSAAVLNQDDLPGIDTIILAGEHLDKDSVGKWATVANLINAYAPTAALGYACCTAPLITISSPRNIGWPRGCAAWVMDPQDPTRLAPPGAVGQLLVESPFLGQSYESGDGGSASALVPRPECLSRPMFSLKPAGDERCFLTEHLVQFDIGDGTLQVVGHKNSKGQLLQFDSHHASSSASSVGETPGVTGPISTPMGDSVSETSLDTTAIDVNLETTDTRTTLLGLSPEKLSRLEALLQPLGQVQQCYPCCSVQEGILVSQVKSPGTYNILVVWELVNASTVSLDRLRTAWERVVKRHAPLRSTFVESLRDGSVFDQVVLTSPSVDVVELPWIEDLTEDDDMLKLTSVTWDMGRPHHRLGLSKAADGRLRCQLLISHAVIDGLSVQALGHDLERSLNDLLPNSGSMDLQSRYFQQLQQIPSEGGPRVYTKRRLLPNIKQLRQFCQEQGTTLFSLTQTAWALVLRAYTLSDDVCFAYMATDRHLLGDDADRAVGFFINLMLCRVGLDGSTPIADVLNKLRQDFVEGFPYQHHPLAEIAHEQGVPASQLFNTTITFMSDDETVEPHCDGVQLHRVADQDVAEYDVVLRVFDSYQDNVAVEFSYWSSSLSSAQAENVFGAFLAAITSIPQSTTVDDVQLMDESMKQQIQQWNSQLPMHVDTCTHDLILDAAQDYPDAPAVESHDGSLSYGEFDVMTGKLAAHLKSLDVGHGIPVVFRMEKSLWAIVAMVGIMRAGCHFVPLDPAWPVERTQFIIDNVGASILLTTESTPALPVQHINHTVVLSPELLNKLPTENSLLPHVKPSDPAYILYTSGSTGQPKGVVVEHQTLSSSSTAHGKAMLMDRQTRAFQFSSFTFDVSLGEIMTTLVHGGCVCIPSSDDRLSNISGAISKLRANQLFMTTTTLGTFSPEDCPTVKTVVCGGELLSQAIKDVWAPHVNLLHGYGPTEACIYAVSGHANDPTLPPSVIGHAMDGNRVWVCRPDDPRILSPIGALGELIIEGPIVAREYFNDSDRTNTSFLDRIPESWGTPSPYRLYRTGDLVRWNMDGSLTFFGRHDGQLKVRGQRCEAGDIENHLTTIEPDIAHCAALVPKQGACASMLVAVLSFKTTHPVLSTTTGEVQLLDTQQVSGIIAKLQESLAQQVPGYMVPQVWLPVVSLPSTTACKTDRRRVSRWVDQLDKATLDNVLNLATTHSATPLADRSPVHMMLATAWGEVLGTPVEFIPDDRSFFSLGGDSILAILVVNRCRAQGIELSVSDILRGRTINDMANNIAISEQHSTSDSSTQGHVTAAHSLALGSGYDLESPVLSQSRTAQLQLASSIDQHTLEDAVRQLIHLHPALRTTYVKEDDAWFARESTDVSKVLLFVSHDGTEAKSSALLDATEGPLLAVDYFPGHNRVAVSALHITLDLASWNLVLRDLDCILSGSPVIPHARPAMDTRASPSHTDEPSVVANLDYWELDPEETYLPHESKYELRIDADASQLLFESCSRSMLTVVDVVVAAAAESFSRSFTDRTVPVIHAADTPRTHVGYGDSVYPVQLTNDLVSSGTAVVAATAKNARLASSKEISSYMAESYTPKVLAARLPEILVRCLDNARFQGNLLQQQGDDLDTATLIPSCISITVSPNDDKSLGVVVAHSWDLGQQKKVRKWVRVLQTALLDTIRAVARANFVSPADFPLVKVSDDKAWEQLRSTINEAVGPSGPTVEDVYPCSPVQQGMLISQAKSTSSYTVDVVWKIHAPSGSPAVSIAKLENAWAKVVQRHSALRTIFVDGSAANEAFLATVLRNPSARVIHQTVVGEDAVESLLAFDPELPVASHEPPHVLTIADAQDKILVHLRINHAVVDGISLDVLQRDLHRAYVDEVGSEWSVSDHSFRDYVAYVKAQDSDKSLDFWKNRLNTVSACRFPQLQVPDVAIANEKRIFKTQIDDIAPLLKLCQTNGVSISNLAQLAWALVLRGYTNNHHVCFGYMTSGRDAPVSGIESAAGVFINLVISDLALDDAMTVKEALESSRAGLADSMDHQYCPLSKVQKALDMGGEPFFNTVLSCYREDDVTPSKTGVAVDLVHLDDTSEFAIAAKIAYTRSTMELSLTYRTEVICPEAADVIGDVWLRTLQSLPSLSDTKISDISLMDPLSSKLVKRWNEHVPGPVDACLHDIITDVARIEPDKMALYSSAGTLTYAELDEFSTRLGHHLVSMGVGPEVIVPLLFEKSIWAVVAMLGVLKAGGAFVALDPAHPAERLALIISDTGSPVMVMSANQATTPLVTGDLSNLEVAMFTVTHESILELPALSDKPCPTVTPDNAAYVIFTSGSTGRPKGVVIEHRAVSTGTKEHGSQMNYTSTSRVLQFASYAFDATIGEVFTTLVYNGTVCIATETERIEDLTGFINRANVDWAFLTPAVARMMTPSDVPTLETLICGGEPIGDLTPRIWSEIKFIQAYGPTETCVFASISDRQHREVRPAIIGHMMGSAAWVVSPSNSDLLVPVGSVGEMLIEGPILGRGYRNDPDKTDASFIRDPEWSVHYPRHSNGRRLYKTGDLVRYNLDGSMDFVQRKDTQIKIRGQRVEAGEIESHVTSAHKDVQHVYVTFVKNGRLSSRLVAIISLKGFGSTESSSSGSLQVLKGDDYDRAKELLRTVTEYLSSKLPRHMVPAVWAVVEGSSVPLTTSGKIDRRLMTNWLEKADEDLVRQILALGQEESVSDDSLTSTEVTIRSVWALVLNLDPQKINSEHRFFSLGGDSITAMQVVSHCRSQGIALTVKDIFKHQTIASLAAFVDYDSAGKIGAPATGNEFDLSDPVEESFALSPIQKMFFDIYPDGVNHFNQSFLVQIASGNKVASPTLHAALNQLVSRHSMLRARYTRSQGQWVQRVTDDVNGSLQYQEHKNTSLGQISNLIDLAQQSLDIQHGPLVSAKLIQLPSRQILALVAHHLVVDMVSWRVLLEELEAILTGKPLAPASVQPVPFQAWVRVQSTLAEELSAHNVLPYPVPEPRQDYWGIDLAKSNGWASTREISFELNEAMTKAILGPCNEPLQTDPQDLFLAAAFRSFAQAFPDRPLPAIFTEGHGRDADVDVDLSRTVGWFTCIVPVALAQDVPEDLLETTMRIKDSRRSVPGHGVPYFSYRYMSGDGVTGNEFRQHDQMEILFNYHGQYQQLERDGALLQTIPEGEFAQRDVDNSARRLAVFDISVAVVSGRARVSMLMPQSLAPTLAQQVEVWSDSFQDKLADVVYKTSTMKSEFTLNDTPLIKDMSYPNLAEMKTLCLEHTGKWGPGSIEEIFPCSPMQEGILLSQMRTPDLYDVRFAFEVSSHDSSPQVSRLHEAWEQVVKRQPMLRTVFLPNLRGSGSFDQAILRKTLATVHHIELEELAEPSSHLVKRVLETMEKAPASSFEYGKVPHELSIYTVGDRMFILLRLSHALVDGASLPYIIKDLQQAYMHKLPAAPGLGYRELVSFIQKQPMDEALEYWSGYLDGAGPCRLPLLLDDAVIPSPGKLEARDIPVPVPDAKALRSLCAKYGVTMASIFHAAWALILRAYIGDDEVHFGYLASGRDAPIQGITSLIGPLINMLISRVNFDRSKTVAQLLQDICEDFASSMSNQYASLAQVQHSLGLGSEPLFTTVVSFQRHDPTSAGADGGSDGIKLTGIDSRDPTEYDVSLNVVDSDQELSFTFTYWTSKISSAHATHMIRALLSALTSFAENVDQPIVNVNLVSPETRCELDSWNAIGMQELHTECAHTLFEQQVEKIPDQQAICAWDGNFTYRELNEASNAFAHHLYSLGEATPKPDEFVITCFDKSAWATVSQMAILKAGAAFAAVDPTYPIVRVKTIVNDLRASVLFTETKYKDRFQGIFSKVIVVDQEMLDSIGGPQLDAPSTPVNGNNLSYSIFTSGSTGQPKGILIEHQSLSTVAKHFAKPYQIDQNTRTLQFAAYTFDLSVGETFMTLLNGGCLCITSERRRLEDLTGAINDFQVNWAFLTPTMADILDPAQVPSMKSLALAGEAATSENIRKWHDKVHFVIAYGPAETTICCNATDGVKATSDPANFGPARGAGIWVADMDDPSILLPVGAVGELLVEGPIVGRGYVDPIKTAEVFIDPPTWLTTQYPRVYRSGDIVRYNPDGTCSFVRRRDNQVKVRGQRIELNEVEVHVSQADADLQHTVVLLPKTGACQGRLTTVLSRHQQQEKVEAQRVLCPVTSEEDRSRNSTLRNKLSSTLPGYMIPKIWITVEQLPLTTNGKMDRRKIQDWVHALTEQELAAIVSSTETTVTGTQDTRKLTPMEQQLVKAWSQVLNLPASSLPLDQSFTSLGGDSISAMQIVSKARECGVTVSVDKVLRSESLSELANHARFKALAPNSNGIQSLVVEKTEPFPLLPIQRMFFEMNPSGNNHFNQTFTVRLSKTLSAERIESAITTVVKHHPMLRARFLKDHNSDWTQQIVPDAESSLGFRQQSFASLSDAVPVLDELQTSLDIHNGPLVASCLINLPDAQVLSLAAHHLVVDLVSWRVILSDLEILLSSESKSLPSLAPAAVTMPAWTDALLSRAKDYNVESVLPFTVPSANFGFWDMDNGRENVMADTVVIQSRLDASSTAALLGRANIAFRTDPDDLMLAALVFSFLRVFPERSVPTIYAEGHGRNAWDDSIDLSRTVGWFTTMYPLVASATTRDLVETVRQVKDIRHSIRDKGFPYFASRYLTAQGRDAFKEHTNMEVLFNYLGQYQQLQQSDTVLRELQEPLEIQDAAPSTPRMALIDILAAVEGSEMVLSIGYNGRMGHRDRLQLWLNEYTAALRSLSTELPTMSPSFTPGDFPLLGIDDAGLKSLAATCKAKVGSLDPTMVESIYPCSPLQQGILVSQAQDAKSYIVYAAWKIRPARGTSFNVNQLKDAWRRLVRYHPVLRTVFCENGTSDGGHAQVLLRADTAAAEPTIKEIQCQRSDVAEFLRSSASSLPTDKPPHILSICTTDDDTYVSLQVSHALIDGTSMNLVMDDLVRSYNGNLQGSGPSYNDYISHICSEPIARSLSYWTETLADTQPCLFPVLSTEGTKRVLNKITLDVPSSTTDAMRQLGRAHAISVSNIFQLAWSLVLRAFTGSDSVCFGYLTSGRDVPVDRIEAMVGPLISMLVSSTQFGSSDDEAQSALDLLKSINRSYIDSLPHQHCSLGSIQNALGVSNTGLFNTVMSLQKINEEAETPEEFGFDLLDSHDPSEYNMTLNILDFNNIVELHFTYWTDKLSDSYASTVVDATLRAVEAIVKDPSRKMPVVDLVGDSERQGLVSRINQDHPTLQTTVHALIEAQVKAIPDNCAVTSWEGDLSYTELDHHATRLAVHLRSLGVGPEVTVPLCFKKSIWTVVAILAVMKAGGVFVPLDPAHPADRIKGIVEQLPSRIVALTSPQCVLTVAHLVDNTISVDASSIAQLENVSSAESLSPGATPSNAVYIIFTSGSTGQPKGVVLEHSAAASGTTAHGHDMSYSRDSRVLQFSSYSFDASILEILTTLVYGGCICVLSEEERINDLVGGINRLRVNWAFLTPAVAMMVEPSQVPTLRLLALGGAPLWLAVLQKWTAVGTIRVVNGYGPTECCALSTHNYYSRSYMRPEVIGKAMGCNTWVVDPRDPNILMPIGAVGELLIEGPIVARGYLNDLVKTQDAFLNGVSWLPSGRLYRTGDIVSYATEGNGDKISYIRRKDTQVKVRGQRIELGEISYQIGASHGSIVAHLVVLGSRGKFSGQIVAIFALDGFPTHQQGNDEPLQLLDSPQDLAKVRAIISEVSEFISDKLPSSMQPSAMVPVNRMPINTSGKIEARRVSAWVDGLDDATYARIMRIADEPDDEPDNEPEANVIQKSEAEDIIRAVVAEVVNVPLEQIPLRRSFFAIGGDSISAMAVVSRCRSRGITFTVSDIFKHKTITALAQFVSQSTQQITKKDGDGIDRSDKVNVDFSLSPIQQMFFDMYPDGVNHFNQSFLVQLPSTEALTSTVVHEAIRQLVDRHSMLRARFSDEDGDWVQRVTPSGDAKSLKYQVHNGVNVDQVVKLIDVAQTSLDIRTGPVMAASLLNLTDKRRILVLVAHHLVIDMVSWRVLLEELEVILSGNGHSLQNMPTSLPFQAWVRTQPRRVSKWSPSRVLPYDIPKPRMDYWLKRGEDNTCGDTRELGFTLDADATKALLGSCNEAFQTDPQDLFLAAAFQSFADAFPDRGPPAIFVEGHGRGDGASEGLDLSRTVGWFTSIVPVALPDGVVATNVVDTLMRIKDVRRSVPGQGVPYFSYRYLSAAGVRKFRNHDKMEILFNYFGQYQQLERDDALLRPVVGDEFPQYDADASVERLAIFDVAGAVTSGRASVTITMPGTLAKARVDGVSLWLDRLKHHLTSLVQVTSDMSTAFTLHDLPLIKNMSYDELSDMREVCLEHTGLWGPGAIEEIFPCSPIQQGILLSQAHRPDLYDVRVALEVSSRNGSLSAQSLGDAWRHVVQRQPMLRTVFLPNMRGNGSFDQAVLRDPVPSIRHVDLGDATDDEMALQTVKQSIAETKGDIFSYGKLPHEFTTYTIGNKTFVFIRLSHALVDGFSLPIVLNDLREAFAHRLSTTPGLSYRELVSFINEQPADQAIGHWVDFLKGSTPCRLPPLLDDASVPSSPELLAIEVEVPCSNALRALCAEHGVTMAIVFQLAWALVLRAYTGEDDVMFGYLTSGRDAPIEGVSTLVGPLINMLTCRAIFNDRSKTVLQLLSQLQDDFINGISNQHVSLAEIQHHLGIGSEGLFTSIISFQRHDAAAGAANDDDGLLKMTPIDGRDPTEYDLSVNVLDEADKDIQIHFTHWTSKASPSHAKHMMQALSAALVAISTKPNQPLVKVDLVGAETRREMDSWNATGIQFVSDECIHNIIERNSQAMPDRQAICGWDRTFTYGELDQAANAFAHHIHSLVDLKPDTFVATCFGKSAWTIVAQLAILKSGGAFVAIDPTHPADRVETILSELGSPPILLTESKHQDRFKTLFPNIVTVNEDTLSSLSVPNGPPSTRVRHSNTAYAIFTSGSTGRPKGIVIEHGSLSTAALTHAGPYQITSDTRALQFAAYTFDVSIGETFYPLSQGGCVCVPSDAARLEDLAGAINGLSADWAFLTPTVADLLDPSLVPGLKTLVLGGEAPTSVNIRRWHDKVFLISGYGPAETTIWCNATGRLNGSSDPANLGPPMGARVWVTDADDPSVLLPVGAVGELLIEGPLVSRGYTDPEKTAAAFISPPGWMTTAYPGKLIYRSGDIGRSRPDGTFSFVRRRDNQVKVRGQRVELNEVEVHISQAETSIRHAVVLYPKSGACQGRLTAVLSHHSLGGEELEQKQTVPGSGGIIAVQSDEAISASDLIQDRLLSTLPPYMIPKIWITVEHLPSTTNGKMDRRQILTWVESLTDDNLASIVQRKSNMTGSVESPTKPKTKMEEHFLQIWSNALNLPIDAIPHNQPFTSLGGDSITAMQVLARARERGITTTVHDILRSRSIADLAGRSRFKNIQLNGSEDSKALTVITDQPFALLPIQRLFFRTQTSVNHHFNQSFIVCLSRPFTADQVRMAIRAIVEHHPMLRARFLADGNEWKQKISPDIAGSFKFQQHHCSSLPDSVETLDDLQASLNISQGPLLVSCLLELSDGQALFLAAHHLVVDLVSWRVILADLEKLLAATSGTTSLPSLEQEGISMPAWTEALIQKSTEYDINSVLPFTVPAADFSFWDMDPTKETNIMADTASLQVRVDGVSTAALLGPANAAFGTDPDDLMIAALIFSFRSIFHERSSIPAVYTESHGRNAWDDGIDLSRTVGWLTTIYPVAVSDIDNAERDLLRVVRQVKDIRRSIPGKGLPYFAYRYLTEEGRAAFEHHDEMEILFNYLGQYQQLQKTDTIIQQIGETTLSTQDASDSTNRLALMDVVAAVEGSELVLSLGYNTKMQHKHRFQAWLDSFKYMLETLASQLPVIPATFTPSDLPLLSLGEDGLSTLAAACHAKVGSWGPDVVEASYPCSPLQQGILLSQAKDESAYVVSGIWKVSPAKGGSPVNLDQLQNAWRRLVQYHQILRTVFCESGRNDGIYAQVVLRENTTESQPTIEVRKCDGPDPLAFLHSSTPALPSDKPPHALLICDAGTDVYLSFNISHALMDGTSLGLMMDDLLRGYHGTLEGVGPSYEPYIAHVYNKPASESLSYWSDTLANARPCHFPVLVDAEGDDTVRSLNKIMRPVPGVEAMRQLGRTHGVSIANFFQVAWALVLRAFTGSDDICFGYLTSGRDVPVDRIEEIVGPLISMLVSSADFSMSDGAPSAIELLQTMNSAYVDSLPHQHCSLADIQRVLRIGNKGLFNTALSLQRVTTGDETQDQIEINVVEGDDPSEYNITVNVVDYGETIDLHFTYWSDKISDSHASDVVEALIRALDAIVQDPNRTLPAVDMLGDSGRKRIMEWNGDGQAPAALNSTVHALIEAHVKESPNRCAVTSSWEGELSYAELDNHATRLSVYLRSLGVGPEVTVPLIFTKSIWMVVSMLAVMKAGGVFVPLDPAHPPERIAMIVEQLPNRAVALASPDRTGLISGLVDNVVALDADEAACIAKDADGDNKLPSDEATPDNAVYIIFTSGSTGQPKGVVLDHRATATEIVTTLVYGGCVCVLSEDERINDLAAAINRLQATWMLLTPAVASTLDPSEVPCIRYIALGGESSSHATNKKWSKGCKVLHAYGPTECCVMCAYDDRTGLLTRPEVIGGSVGCNNWVVDPRDPSVLMPIGAVGELLVQGPIMARGYLNNPDKTQESFLDTGLPSVSGLSRAYKTGDLVSYCSEGKGNKLTFVRRKDTQVKVRGQRIELGEISHQISASNDKVATQMVTLGSRGTLNGKIVAVLTLRGLQTTEDGGDTEPLQILDNPKDIQIARDIVAEVQNYIADKLPGYMHPSVMIVVNRMPINSSGKLETRRVAQWVDEVTDEMYERIIKNLADNEPEAGSESAQTAVVQIISEAVAEVINLPGKVSLRRSFISMGGDSITAMQVMALCRRRGVSLPVQDILKSNNIIAMAAKAQQIGGSSVDSAKDEDEFAPFPLSPIQKLHLTQFRDGENHYNQSMLLKLRRPISETVLHEALLQLVRRHPMLRARFDNDSTRGQWTQRVTNDIQGSLSYAVTEFNTLEEAMGTMIEAERGLDITAGPLVAARVVRVHDSMSIFLVAHHLVIDLVSWRIVLQDLEQLIAGTSLPGTQMSWSYQRWAHSLMKYAETNASTALALPFTPTEPDLDFWGVKKTSNDFNNLVQGDFTLDPSLTSALLDSADKNLKAEVLDVLLAMAAHTFSSVFSDRAAPTFHTETHGRDHPQDTTASVHETIGWFTAIAPLVLDTPSDEYIDSVIRVKDMRRAIPGLGIPYFTAKTLQGSQTLPVEILFNYLGRFQQLERDDGLFESLPKSMGPVDVNLSAARLSVIDISAVVEKDALTVSWNYSAQIQHQDKLSKWFALYEQALHEVVSALQKTSLQLTKSDVPLLPISHQQLKPLNKALAAVSRNGVEAVEDVYPTSPMQRGILLSQSKDASQYDVHAVWEITPANRHDSVDVSRLQRAWYRVIQRHSMLRTVFIDSVVDNSPFDQVVLNKFRPSIKLLTYDDDEEDHDSMMEELWESANGSFAQNAPPHRLALCSDTQGKVYAHFQVSHALIDAGSLRTIIKDWSLAYASPNLTMTPDQSEIRHLHTDVDSGTRLKALAKELNISMASIFQLAWALVLRSYTNLQDICFGYVSSGRDVELDGIVDAVGPFINILVSRIVFGKGDTAAAMLKQLFSTYLDSLPHQHASLADITHALKMPGGKLFNTAFSFQKISQSNGGGKAQDLPLSFSTIGGADPTEFDVTITVIENDSSIEFSIQYSTSFLSEPQANNLSQSLIQALDAIEATPSEAIETLDLVPAKHMEQLKTWGDRLPPTVDRHVHDLFDDMVRSTPTAPAIHAWDGEFTYAELDRESSRLAGLLLKQGVKPDTFVALCFEKSAWVAVAYLAILKAGAAFMLLDPEAPIERIQYMMEQTKTSMVLCSPTYKDMVDDWDATAIVISKEVMGTLPDFAGPFPNISTSSAAYIIFTSGTTGKPKGAVIEHGAYSSSAIAQKKALYIGPGSRFLQFASFMFDATMIEMVTPLLSGGCVCIPRRQDIISDLPRVVREMNINMAILTSSFIRTMSPEEVPTIKRLIQGGEPLSQKDIDIWADKVILGNAYGPSECSVMASCLSDVLRTSEPSNIGYPAACAHWVTEPANMHRLVPIGAIGELLLQGPTLSRGYINNPDKTAEAFVTGLNWATQVGRDPDTRFYATGDLVRLNSDGSVTFVGRKDTQIKIHGQRMELGEIQHHLTTIDEIRHSVVLSPSEGPLQKRLVAVLELANLSSTAASSEEIKLIEPSLRSKATESIQRIRDIITQRLPSYMIPSTWIVVQSMPTMISGKLNLPAVQFWVQNINDETYQELHAAEAVSELDSSDYVAMQVSRKLSSLLVDAPGSTGKLEDFVGKDIVPMQCGLDSITAITFSTWLRKTFGVTISLATLLSLDTSIQTLAVTIKADMAKVGSSGPSNVESVTESTSTTKAAIDLHSEFQHYDQALSQLPVSEIPNTGVAKIPSNFLVTGSTGFLGSQIVRQLILRPNINKVFCLVRAEDDIQAQERMMEVARKGQWWQPELSERIEAWSGDLAKPHLGLDDTRWASVVGGSIDAIIHNGAMVHWHLGYRDLKDANVGSTFDLLSALSKAPSPPRFAYVTGGYFPDEERTDNEVLDLLQGGDGYSQTKFLSEALVRSHGQRLCRHSATFPMPVVIQPGLVIGDADHGVSNLDDFLWRVVASALRIGAYNVDEFNDPNAWLLVAGSDQIATSTIDACMTTVSASATTTIPPSIRFVDGVPVKELWNLLIDEFDFSLRPMSGPEWLQALENDMDSQGPSHPLFPVFEFLQLKQGAVGTLKPTNGDSICPQVETLYRLRQSVDYLNNIGFFASSDSVSPFASKAAFRRTGLRPAKTAHF.

Positions alanine 19–lysine 413 are adenylation (A) domain 1. The interval histidine 426–valine 452 is disordered. Positions lysine 690 to isoleucine 897 are condensation (C) domain 1. The tract at residues aspartate 918–arginine 1310 is adenylation (A) domain 2. The region spanning alanine 1446 to glutamate 1522 is the Carrier 1 domain. Residue serine 1483 is modified to O-(pantetheine 4'-phosphoryl)serine. Residues valine 1952 to serine 2380 form a condensation (C) domain 2 region. Residues valine 2406 to arginine 2805 are adenylation (A) domain 3. The region spanning aspartate 2945 to serine 3021 is the Carrier 2 domain. An O-(pantetheine 4'-phosphoryl)serine modification is found at serine 2982. An epimerase (E) domain 1 region spans residues glutamate 3041–leucine 3481. Residues glutamate 3515–aspartate 3957 form a condensation (C) domain 3 region. The segment at phenylalanine 3976 to arginine 4371 is adenylation (A) domain 4. A Carrier 3 domain is found at arginine 4508–alanine 4584. Serine 4545 carries the post-translational modification O-(pantetheine 4'-phosphoryl)serine. The epimerase (E) domain 2 stretch occupies residues phenylalanine 4603–serine 5022. Residues glutamate 5069 to leucine 5501 are condensation (C) domain 4. Positions glutamate 5521–arginine 5918 are adenylation (A) domain 5. One can recognise a Carrier 4 domain in the interval serine 6068–threonine 6141. Serine 6102 carries the post-translational modification O-(pantetheine 4'-phosphoryl)serine. The interval phenylalanine 6162–glutamine 6512 is epimerase (E) domain 3. The condensation (C) domain 5 stretch occupies residues glutamate 6636–methionine 7076. The interval glutamate 7097–arginine 7491 is adenylation (A) domain 6. The Carrier 5 domain maps to lysine 7636 to asparagine 7712. Residue serine 7673 is modified to O-(pantetheine 4'-phosphoryl)serine. The interval alanine 7733–glutamine 8162 is epimerase (E) domain 4. Residues glutamate 8205–isoleucine 8638 form a condensation (C) domain 6 region. Residues glutamate 8660–valine 8832 form an adenylation (A) domain 7 region. A Carrier 6 domain is found at serine 9173–glycine 9248. At serine 9209 the chain carries O-(pantetheine 4'-phosphoryl)serine. Residues arginine 9565–lysine 9683 form an epimerase (E) domain 5 region. Residues valine 9721–leucine 10116 form a condensation (C) domain 7 region. The interval aspartate 10136–isoleucine 10529 is adenylation (A) domain 8. In terms of domain architecture, Carrier 7 spans leucine 10663–methionine 10749. Serine 10708 is modified (O-(pantetheine 4'-phosphoryl)serine). The tract at residues asparagine 10806–tryptophan 11104 is thioesterase (TE) domain.

The protein belongs to the NRP synthetase family.

The protein operates within secondary metabolite biosynthesis. In terms of biological role, nonribosomal peptide synthetase; part of the Fg3_54/C64 gene cluster that mediates the biosynthesis of the octapeptide fusaoctaxin A, a virulence factor that is required for cell-to-cell invasiveness of plant host. The 2 nonribosomal peptide synthetases NRPS9 and NRPS5 form an assembly line which likely utilizes GABA as a starter unit (loaded on the unique module M1 of NRPS9) and sequentially incorporates seven extender units composed of the residues L-Ala, L-allo-Ile, L-Ser, L-Val, L-Ser, L-Leu and L-Leu, respectively. During the process, each of the residues that are tethered on modules M3-M7 of NRPS5 containing an E domain can undergo an epimerization reaction to produce a D-configuration before the transpeptidation reaction occurs. The elongation of the peptidyl chain might be terminated by module M8-mediated L-Leu incorporation, followed by R domain-catalyzed 4 electron reduction to release the resulting octapeptide from the assembly line as an alcohol. Fusaoctaxin A is cleaved by the cluster specific ABC transporter FGM5 to the pentapeptide fusapentaxin A and the tripeptide fusatrixin A. The other enzymes from the cluster, FGM1, FGM2, FGM3 and FGM9 seem not to be involved in the biosynthesis of fusaoctaxin A and their functions have still to be determined. The sequence is that of Nonribosomal peptide synthetase 5 from Gibberella zeae (strain ATCC MYA-4620 / CBS 123657 / FGSC 9075 / NRRL 31084 / PH-1) (Wheat head blight fungus).